A 392-amino-acid chain; its full sequence is Alaserpin (392 aa).

The first 16 residues, 1–16 (MKIIMCIFGLAALAMA), serve as a signal peptide directing secretion. A glycan (N-linked (GlcNAc...) asparagine) is linked at Asn-85.

It belongs to the serpin family. As to expression, hemolymph.

The protein resides in the secreted. It is found in the extracellular space. In terms of biological role, inhibits elastase. This is Alaserpin from Manduca sexta (Tobacco hawkmoth).